Here is a 1191-residue protein sequence, read N- to C-terminus: Phosphatidylinositol 3,4,5-trisphosphate 5-phosphatase 1 (1191 aa).

The SH2 domain occupies 8–104; the sequence is WNHGNITRSK…GLVTHLQYPV (97 aa). Residues 122–148 form a disordered region; sequence SVMSPPELPPRNIPMSAGPSEAKDLPL. Positions 127-132 match the SH3-binding 1 motif; it reads PELPPR. At serine 246 the chain carries Phosphoserine. The NPXY motif 1 motif lies at 915–918; it reads NPNY. Phosphotyrosine is present on tyrosine 918. Serine 935 carries the post-translational modification Phosphoserine. Tyrosine 945 carries the phosphotyrosine modification. 2 disordered regions span residues 947–994 and 1021–1191; these read QLPK…EARP and YGSV…TAMQ. A compositionally biased stretch (pro residues) spans 962 to 972; sequence PPTPPSQPPLS. Residue threonine 964 is modified to Phosphothreonine. Phosphoserine is present on residues serine 967 and serine 972. Positions 970-975 match the SH3-binding 2 motif; that stretch reads PLSPKK. The interaction with DAB2 stretch occupies residues 1015–1029; that stretch reads MFENPLYGSVSSFPK. Positions 1018–1021 match the NPXY motif 2 motif; it reads NPLY. A Phosphotyrosine modification is found at tyrosine 1021. Positions 1032–1046 are enriched in basic and acidic residues; sequence PRKEQESPKMLRKEP. The SH3-binding 3 signature appears at 1039 to 1050; that stretch reads PKMLRKEPPPCP. Over residues 1141–1150 the composition is skewed to pro residues; sequence IPAPRPPLPV. Residues 1162 to 1184 show a composition bias toward basic and acidic residues; it reads KGRDYRDNTELPHHGKHRQEEGL.

The protein belongs to the inositol 1,4,5-trisphosphate 5-phosphatase family. Interacts with tyrosine phosphorylated form of SHC1. Interacts with tyrosine phosphorylated form of DOK1. Interacts with tyrosine phosphorylated form of DOK3. Interacts with tyrosine phosphorylated form of SLAMF1/CD150. Interacts with PTPN11/SHP-2 in response to IL-3. Interacts with receptor EPOR. Interacts with receptors MS4A2/FCER1B and FCER1G. Interacts with receptors FCGR2B and FCGR3. Interacts with receptor FCGR2A, leading to regulate gene expression during the phagocytic process. Interacts with GRB2. Interacts with PLCG1. Interacts with tyrosine kinases SRC and TEC. Interacts with CRKL. Interacts with c-Met/MET. Interacts with MILR1 (tyrosine-phosphorylated). Isoform 5 interacts with IL6ST/gp130. Can weakly interact (via NPXY motif 2) with DAB2 (via PID domain); the interaction is impaired by tyrosine phosphorylation of the NPXY motif. Interacts (via SH2 domain) with tyrosine phosphorylated KLRC1 (via ITIM). Interacts with MPL/TPOR. Tyrosine phosphorylated by the members of the SRC family after exposure to a diverse array of extracellular stimuli such as cytokines, growth factors, antibodies, chemokines, integrin ligands and hypertonic and oxidative stress. Phosphorylated upon IgG receptor FCGR2B-binding. In terms of tissue distribution, specifically expressed in immune and hematopoietic cells. Levels vary considerably within this compartment. Lost during erythropoiesis when erythroid cells become Ter119+. Increases substantially with T-cell maturation and when resting B-cells are activated. Also present in mature granulocytes, monocyte/macrophages, mast cells and platelets. Isoform 5 is the only form expressed in embryonic stem (ES) cells and is coexpressed with other isoforms in hematopoietic stem cells, and disappears with differentiation.

It localises to the cytoplasm. Its subcellular location is the cell membrane. The protein localises to the membrane raft. It is found in the cytoskeleton. The enzyme catalyses a 1,2-diacyl-sn-glycero-3-phospho-(1D-myo-inositol-3,4,5-trisphosphate) + H2O = a 1,2-diacyl-sn-glycero-3-phospho-(1D-myo-inositol-3,4-bisphosphate) + phosphate. The catalysed reaction is a 1,2-diacyl-sn-glycero-3-phospho-(1D-myo-inositol-4,5-bisphosphate) + H2O = a 1,2-diacyl-sn-glycero-3-phospho-(1D-myo-inositol 4-phosphate) + phosphate. It carries out the reaction 1D-myo-inositol 1,3,4,5-tetrakisphosphate + H2O = 1D-myo-inositol 1,3,4-trisphosphate + phosphate. Its activity is regulated as follows. Activated upon translocation to the sites of synthesis of PtdIns(3,4,5)P3 in the membrane. Functionally, phosphatidylinositol (PtdIns) phosphatase that specifically hydrolyzes the 5-phosphate of phosphatidylinositol-3,4,5-trisphosphate (PtdIns(3,4,5)P3) to produce PtdIns(3,4)P2, thereby negatively regulating the PI3K (phosphoinositide 3-kinase) pathways. Also able to hydrolyze the 5-phosphate of phosphatidylinositol-4,5-bisphosphate (PtdIns(4,5)P3) and inositol 1,3,4,5-tetrakisphosphate. Acts as a negative regulator of B-cell antigen receptor signaling. Mediates signaling from the FC-gamma-RIIB receptor (FCGR2B), playing a central role in terminating signal transduction from activating immune/hematopoietic cell receptor systems. Acts as a negative regulator of myeloid cell proliferation/survival and chemotaxis, mast cell degranulation, immune cells homeostasis, integrin alpha-IIb/beta-3 signaling in platelets and JNK signaling in B-cells. Regulates proliferation of osteoclast precursors, macrophage programming, phagocytosis and activation and is required for endotoxin tolerance. Involved in the control of cell-cell junctions, CD32a signaling in neutrophils and modulation of EGF-induced phospholipase C activity. Key regulator of neutrophil migration, by governing the formation of the leading edge and polarization required for chemotaxis. Modulates FCGR3/CD16-mediated cytotoxicity in NK cells. Mediates the activin/TGF-beta-induced apoptosis through its Smad-dependent expression. The polypeptide is Phosphatidylinositol 3,4,5-trisphosphate 5-phosphatase 1 (Inpp5d) (Mus musculus (Mouse)).